The primary structure comprises 353 residues: Stearoyl-CoA desaturase 4 (353 aa).

The segment at 1–42 is disordered; it reads MTAHLPQEISSRCSTTNIMEPHSRRQQDGEEKMPLQAEDIRP. The Cytoplasmic segment spans residues 1 to 66; that stretch reads MTAHLPQEIS…EGPPPKLEYV (66 aa). Residues 8-18 are compositionally biased toward polar residues; it reads EISSRCSTTNI. Basic and acidic residues predominate over residues 21–42; that stretch reads PHSRRQQDGEEKMPLQAEDIRP. A helical membrane pass occupies residues 67–87; sequence WRNIIFMALLHVGALYGITLV. Residue N69 participates in substrate binding. At 88–91 the chain is on the lumenal side; sequence PSCK. A helical membrane pass occupies residues 92 to 112; sequence VYTWLLGVFYNVVAGLGITAG. At 113–211 the chain is on the cytoplasmic side; it reads AHRLWSHRTY…EKLVMFQRRY (99 aa). The Fe cation site is built by H114 and H119. The short motif at 114–119 is the Histidine box-1 element; sequence HRLWSH. Substrate-binding residues include N142, R149, and D150. H151, H154, and H155 together coordinate Fe cation. Residues 151–155 carry the Histidine box-2 motif; it reads HRAHH. The substrate site is built by R182 and K183. A helical transmembrane segment spans residues 212-231; it reads YKLAVTLMFIILPTLVPWYL. Topologically, residues 232–235 are lumenal; that stretch reads WGET. A helical transmembrane segment spans residues 236 to 257; sequence FQHSLCVSNFLRYAVLLNFTWL. W256 contributes to the substrate binding site. The Cytoplasmic segment spans residues 258 to 353; the sequence is VNSAAHLYGY…RTGDGSHKSS (96 aa). Residues H263, H292, H295, and H296 each contribute to the Fe cation site. Residues 292 to 296 carry the Histidine box-3 motif; it reads HNYHH.

The protein belongs to the fatty acid desaturase type 1 family. Fe(2+) is required as a cofactor. As to expression, detected in heart, but not in brain, liver, skin or adipose tissue.

It is found in the endoplasmic reticulum membrane. The protein localises to the microsome membrane. It carries out the reaction octadecanoyl-CoA + 2 Fe(II)-[cytochrome b5] + O2 + 2 H(+) = (9Z)-octadecenoyl-CoA + 2 Fe(III)-[cytochrome b5] + 2 H2O. The enzyme catalyses hexadecanoyl-CoA + 2 Fe(II)-[cytochrome b5] + O2 + 2 H(+) = (9Z)-hexadecenoyl-CoA + 2 Fe(III)-[cytochrome b5] + 2 H2O. Functionally, stearoyl-CoA desaturase that utilizes O(2) and electrons from reduced cytochrome b5 to introduce the first double bond into saturated fatty acyl-CoA substrates. Catalyzes the insertion of a cis double bond at the delta-9 position into fatty acyl-CoA substrates including palmitoyl-CoA and stearoyl-CoA. Required for the biosynthesis of membrane phospholipids, cholesterol esters and triglycerides. The polypeptide is Stearoyl-CoA desaturase 4 (Mus musculus (Mouse)).